Reading from the N-terminus, the 459-residue chain is Nucleobindin-1 (459 aa).

The N-terminal stretch at 1 to 25 is a signal peptide; sequence MPTSVPRGAPFLLLPPLLMLSAVLA. A Phosphoserine modification is found at Ser-85. Thr-147 bears the Phosphothreonine mark. A coiled-coil region spans residues 149-217; the sequence is EARDLELLIQ…QQRRHREHPK (69 aa). A DNA-binding region spans residues 171–217; sequence HHEEFKRYEMLKEHERRRYLESLGEEQRKEAERKLQEQQRRHREHPK. The segment covering 192-209 has biased composition (basic and acidic residues); sequence SLGEEQRKEAERKLQEQQ. The segment at 192–220 is disordered; that stretch reads SLGEEQRKEAERKLQEQQRRHREHPKVNV. The tract at residues 227-320 is binds to GNAI2 and GNAI3; sequence LKEVWEELDG…VTLEEFLAST (94 aa). EF-hand domains follow at residues 239–274 and 291–326; these read PNRF…ELEK and ERLR…KEFG. 8 residues coordinate Ca(2+): Asp-252, Asn-254, Asp-256, Glu-263, Asp-304, Asn-306, Asp-308, and Glu-315. The short motif at 302-332 is the GBA element; it reads NVDTNQDRLVTLEEFLASTQRKEFGETAEGW. The stretch at 340–407 forms a coiled coil; sequence AYTEEELKRF…RKQQQQEQSA (68 aa). Ser-368 carries the phosphoserine modification. The disordered stretch occupies residues 393–459; sequence LQMEQRKQQQ…VLPQLDSQHL (67 aa). The span at 433 to 445 shows a compositional bias: basic and acidic residues; it reads DQKDVPASEKKVP. Position 456 is a phosphoserine (Ser-456).

Belongs to the nucleobindin family. Interacts (via GBA motif) with guanine nucleotide-binding protein G(i) alpha subunits GNAI1, GNAI2 and GNAI3 with higher affinity for GNAI1 and GNAI3 than for GNAI2. Preferentially interacts with inactive rather than active GNAI3. Interaction with GNAI3 is inhibited when NUCB1 binds calcium, probably due to a conformational change which renders the GBA motif inaccessible. Minor constituent of the mineralized matrix of bone. Detected in calvaria, rib cartilage, liver, kidney, spleen, brain, lung, skeletal and heart muscle with highest expression in calvaria and approximately half the amount in kidney, liver and brain.

The protein localises to the golgi apparatus. It is found in the cis-Golgi network membrane. The protein resides in the cytoplasm. Its subcellular location is the secreted. Functionally, major calcium-binding protein of the Golgi which may have a role in calcium homeostasis. Acts as a non-receptor guanine nucleotide exchange factor which binds to and activates alpha subunits of guanine nucleotide-binding proteins (G proteins). This chain is Nucleobindin-1 (Nucb1), found in Rattus norvegicus (Rat).